The following is a 145-amino-acid chain: Mitochondrial import receptor subunit TOM20 homolog (145 aa).

Over 1 to 6 (MVGRNS) the chain is Mitochondrial intermembrane. Residues 7-24 (AIAAGVCGALFIGYCIYF) traverse the membrane as a helical segment. The Cytoplasmic segment spans residues 25–145 (DRKRRSDPNF…AQSLAEDDVE (121 aa)). Glycyl lysine isopeptide (Lys-Gly) (interchain with G-Cter in ubiquitin) cross-links involve residues Lys35, Lys56, Lys61, and Lys68. Residues Ser135 and Ser138 each carry the phosphoserine modification.

The protein belongs to the Tom20 family. In terms of assembly, forms part of the preprotein translocase complex of the outer mitochondrial membrane (TOM complex) which consists of at least 7 different proteins (TOMM5, TOMM6, TOMM7, TOMM20, TOMM22, TOMM40 and TOMM70). Interacts with TOM22. Interacts with APEX1. Interacts with TBC1D21. Upon mitochondrial depolarization, interacts with PINK1; the interaction is required for PINK1-TOM-TIM23 supercomplex formation which is critical for PINK1 stabilization at the outer mitochondrial membrane, kinase activation and downstream mitophagy. Post-translationally, ubiquitinated by PRKN during mitophagy, leading to its degradation and enhancement of mitophagy. Deubiquitinated by USP30. In terms of tissue distribution, expressed in brain, kidney, stomach, colon, jejunum, ileum, testis, ovary and oviduct (at protein level). In the brain, expressed in neural cells of the cerebrum and cerebellum (at protein level). In the kidney, expressed in the proximal to distal tubule in the cortex and the outer and inner zones of the medulla (at protein level). In the stomach, expressed in the basal layer of stratified squamous epithelia in the forestomach and in the gastric pit and fundic gland of the glandular stomach (at protein level). Expressed in epithelial cells of the jejunum, ileum, and colon (at protein level). In the testis, expressed by spermatocytes and spermatogonia (at protein level). In the ovaries, expressed by follicular epithelial cells and corpus luteum cells (at protein level). In the oviduct, expressed in the epithelia of the isthmus and the ciliated cells of the ampulla (at protein level). Expressed in the sperm midpiece (at protein level).

It is found in the mitochondrion outer membrane. Central component of the receptor complex responsible for the recognition and translocation of cytosolically synthesized mitochondrial preproteins. Together with TOM22 functions as the transit peptide receptor at the surface of the mitochondrion outer membrane and facilitates the movement of preproteins into the TOM40 translocation pore. Required for the translocation across the mitochondrial outer membrane of cytochrome P450 monooxygenases. This is Mitochondrial import receptor subunit TOM20 homolog (Tomm20) from Mus musculus (Mouse).